The following is a 204-amino-acid chain: Guanylate kinase (204 aa).

The region spanning 16–196 is the Guanylate kinase-like domain; sequence AKVIIFSAPS…AKAHALKVIK (181 aa). Residue 23–30 coordinates ATP; sequence APSGSGKS.

Belongs to the guanylate kinase family.

Its subcellular location is the cytoplasm. The enzyme catalyses GMP + ATP = GDP + ADP. Its function is as follows. Essential for recycling GMP and indirectly, cGMP. In Bacteroides fragilis (strain ATCC 25285 / DSM 2151 / CCUG 4856 / JCM 11019 / LMG 10263 / NCTC 9343 / Onslow / VPI 2553 / EN-2), this protein is Guanylate kinase.